We begin with the raw amino-acid sequence, 251 residues long: Imidazole glycerol phosphate synthase subunit HisF (251 aa).

Residues aspartate 11 and aspartate 130 contribute to the active site.

It belongs to the HisA/HisF family. As to quaternary structure, heterodimer of HisH and HisF.

It localises to the cytoplasm. The catalysed reaction is 5-[(5-phospho-1-deoxy-D-ribulos-1-ylimino)methylamino]-1-(5-phospho-beta-D-ribosyl)imidazole-4-carboxamide + L-glutamine = D-erythro-1-(imidazol-4-yl)glycerol 3-phosphate + 5-amino-1-(5-phospho-beta-D-ribosyl)imidazole-4-carboxamide + L-glutamate + H(+). It functions in the pathway amino-acid biosynthesis; L-histidine biosynthesis; L-histidine from 5-phospho-alpha-D-ribose 1-diphosphate: step 5/9. Its function is as follows. IGPS catalyzes the conversion of PRFAR and glutamine to IGP, AICAR and glutamate. The HisF subunit catalyzes the cyclization activity that produces IGP and AICAR from PRFAR using the ammonia provided by the HisH subunit. The protein is Imidazole glycerol phosphate synthase subunit HisF of Pelodictyon phaeoclathratiforme (strain DSM 5477 / BU-1).